A 73-amino-acid polypeptide reads, in one-letter code: Omega-hexatoxin-Ar1b (73 aa).

Positions 1-22 are cleaved as a signal peptide; that stretch reads MNTATGFIVLLVLATVLGCIEA. Residues 23–37 constitute a propeptide that is removed on maturation; the sequence is GESHVREDAMGRARR. Intrachain disulfides connect C40-C54, C47-C58, and C53-C72.

It belongs to the neurotoxin 08 (Shiva) family. 01 (omega toxin) subfamily. As to expression, expressed by the venom gland.

The protein localises to the secreted. Insecticidal toxin that reversibly and voltage-independently blocks both mid-low- (M-LVA) and high-voltage-activated (HVA) calcium channels (Cav) in cockroach DUM neurons. Also causes a modest block of insect sodium channel currents (Nav). Induces potent excitatory symptoms, followed by flaccid paralysis leading to death in house crickets. The sequence is that of Omega-hexatoxin-Ar1b from Atrax robustus (Sydney funnel-web spider).